The following is a 735-amino-acid chain: Photosystem I P700 chlorophyll a apoprotein A2 (735 aa).

The next 8 helical transmembrane spans lie at 47–70 (IFAS…FHVA), 136–159 (LFTG…LHLQ), 176–200 (LNHH…HVAI), 274–292 (MAHH…GHMY), 331–354 (LHFQ…QHIY), 370–396 (AALY…IFFI), 418–440 (AIIS…LYVH), and 518–536 (FLVH…LILV). Residues cysteine 560 and cysteine 569 each contribute to the [4Fe-4S] cluster site. A run of 2 helical transmembrane segments spans residues 576–597 (AFYL…YFHW) and 644–666 (LSVW…MFLI). Chlorophyll a is bound by residues histidine 655, methionine 663, and tyrosine 671. Residue tryptophan 672 participates in phylloquinone binding. Residues 708 to 728 (LVGLVHFSVGYIFTYAAFLIA) traverse the membrane as a helical segment.

The protein belongs to the PsaA/PsaB family. In terms of assembly, the PsaA/B heterodimer binds the P700 chlorophyll special pair and subsequent electron acceptors. PSI consists of a core antenna complex that captures photons, and an electron transfer chain that converts photonic excitation into a charge separation. The eukaryotic PSI reaction center is composed of at least 11 subunits. The cofactor is P700 is a chlorophyll a/chlorophyll a' dimer, A0 is one or more chlorophyll a, A1 is one or both phylloquinones and FX is a shared 4Fe-4S iron-sulfur center..

It localises to the plastid. It is found in the chloroplast thylakoid membrane. It carries out the reaction reduced [plastocyanin] + hnu + oxidized [2Fe-2S]-[ferredoxin] = oxidized [plastocyanin] + reduced [2Fe-2S]-[ferredoxin]. Its function is as follows. PsaA and PsaB bind P700, the primary electron donor of photosystem I (PSI), as well as the electron acceptors A0, A1 and FX. PSI is a plastocyanin/cytochrome c6-ferredoxin oxidoreductase, converting photonic excitation into a charge separation, which transfers an electron from the donor P700 chlorophyll pair to the spectroscopically characterized acceptors A0, A1, FX, FA and FB in turn. Oxidized P700 is reduced on the lumenal side of the thylakoid membrane by plastocyanin or cytochrome c6. This is Photosystem I P700 chlorophyll a apoprotein A2 from Chlamydomonas moewusii (Chlamydomonas eugametos).